Consider the following 300-residue polypeptide: Protein SPEAR4 (300 aa).

The span at 1–10 (MCSKTSSVSY) shows a compositional bias: polar residues. Residues 1–45 (MCSKTSSVSYGNREDDDNYSSLCPKKQKHNNGGKKRVPRRGPGVA) form a disordered region. Residues 25–39 (KKQKHNNGGKKRVPR) show a composition bias toward basic residues. Positions 40 to 48 (RGPGVAELE) match the SPL motif. Positions 294 to 300 (IDLRLKL) match the EAR motif.

As to quaternary structure, interacts with SPL and SPEAR2. Expressed in leaves.

Functionally, adapter-like transcriptional repressor recruiting TPL/TPR coepressors to inhibit TCP transcription factors. May be involved in leaf development. The chain is Protein SPEAR4 from Arabidopsis thaliana (Mouse-ear cress).